Consider the following 201-residue polypeptide: 3-isopropylmalate dehydratase small subunit (201 aa).

It belongs to the LeuD family. LeuD type 1 subfamily. Heterodimer of LeuC and LeuD.

It catalyses the reaction (2R,3S)-3-isopropylmalate = (2S)-2-isopropylmalate. Its pathway is amino-acid biosynthesis; L-leucine biosynthesis; L-leucine from 3-methyl-2-oxobutanoate: step 2/4. Its function is as follows. Catalyzes the isomerization between 2-isopropylmalate and 3-isopropylmalate, via the formation of 2-isopropylmaleate. This is 3-isopropylmalate dehydratase small subunit from Salmonella schwarzengrund (strain CVM19633).